Reading from the N-terminus, the 249-residue chain is Probable transcriptional regulatory protein LBJ_0543 (249 aa).

The protein belongs to the TACO1 family.

It is found in the cytoplasm. In Leptospira borgpetersenii serovar Hardjo-bovis (strain JB197), this protein is Probable transcriptional regulatory protein LBJ_0543.